The following is a 717-amino-acid chain: F-box only protein 42 (717 aa).

Acidic residues predominate over residues 1 to 30; the sequence is MASSSDSEDDSFMAVDQEETVLEGTMEQDE. Residues 1-47 form a disordered region; it reads MASSSDSEDDSFMAVDQEETVLEGTMEQDEEPHPVLEAEETRHNRSM. Residues 31–43 show a composition bias toward basic and acidic residues; that stretch reads EPHPVLEAEETRH. The region spanning 44–93 is the F-box domain; that stretch reads NRSMSELPEEVLEYILSFLSPYQEHKTAALVCKQWYRLIKGVAHQCYHGF. Kelch repeat units follow at residues 132–184, 186–242, 244–293, and 295–342; these read SMYV…VYKD, LVLF…VIDD, MIVF…VIDD, and TILI…LWCH. 2 disordered regions span residues 361 to 472 and 508 to 539; these read RAPL…SAAE and PASSSNPMDGMDNRTVGGSMRHPPEQTNGVHT. Residues 363–376 are compositionally biased toward low complexity; sequence PLSPSLNSRPSPIS. Ser365 and Ser373 each carry phosphoserine. At Thr378 the chain carries Phosphothreonine. 2 stretches are compositionally biased toward polar residues: residues 416 to 426 and 455 to 469; these read QRQTPSGSREG and SLDSPVQAISPSTPS. Ser552 carries the post-translational modification Phosphoserine. Residues 570–596 show a composition bias toward low complexity; sequence GPSASAALSPPLGSSPGSPGSQSLSSG. The disordered stretch occupies residues 570–635; it reads GPSASAALSP…PQSLNVGKPL (66 aa).

As to quaternary structure, component of some SCF complex, composed of CUL1, SKP1, RBX1 and FBXO42. Interacts (via the kelch domain) with p53/TP53; interaction is direct.

In terms of biological role, substrate-recognition component of some SCF (SKP1-CUL1-F-box protein)-type E3 ubiquitin ligase complex. Specifically recognizes p53/TP53, promoting its ubiquitination and degradation. This Pongo abelii (Sumatran orangutan) protein is F-box only protein 42 (FBXO42).